Here is a 550-residue protein sequence, read N- to C-terminus: Undecaprenyl phosphate-alpha-4-amino-4-deoxy-L-arabinose arabinosyl transferase 2 (550 aa).

Transmembrane regions (helical) follow at residues 4–24 (LKPG…PLSF), 81–101 (FAVH…VYWL), 110–132 (WLGL…GTYA), 176–196 (FMTK…PWVI), 204–224 (VFIY…PWVI), 255–275 (APFW…LGLL), 288–308 (TQSG…FFSL), 313–333 (LPTY…RYAA), 348–368 (LLFG…WGLA), 381–401 (VLLG…TLRA), and 409–429 (AALC…QQVI).

Belongs to the glycosyltransferase 83 family.

It is found in the cell inner membrane. It carries out the reaction 4-amino-4-deoxy-alpha-L-arabinopyranosyl di-trans,octa-cis-undecaprenyl phosphate + lipid IVA = lipid IIA + di-trans,octa-cis-undecaprenyl phosphate.. Its pathway is lipopolysaccharide metabolism; 4-amino-4-deoxy-beta-L-arabinose-lipid A biosynthesis. Functionally, catalyzes the transfer of the L-Ara4N moiety of the glycolipid undecaprenyl phosphate-alpha-L-Ara4N to lipid A. The modified arabinose is attached to lipid A and is required for resistance to polymyxin and cationic antimicrobial peptides. The sequence is that of Undecaprenyl phosphate-alpha-4-amino-4-deoxy-L-arabinose arabinosyl transferase 2 from Sodalis glossinidius (strain morsitans).